The sequence spans 258 residues: Phosphate import ATP-binding protein PstB (258 aa).

Positions 13–253 constitute an ABC transporter domain; the sequence is ITVENLNLWY…PREKSTEDYI (241 aa). Residue 45–52 coordinates ATP; sequence GPSGCGKS.

It belongs to the ABC transporter superfamily. Phosphate importer (TC 3.A.1.7) family. As to quaternary structure, the complex is composed of two ATP-binding proteins (PstB), two transmembrane proteins (PstC and PstA) and a solute-binding protein (PstS).

The protein resides in the cell membrane. The catalysed reaction is phosphate(out) + ATP + H2O = ADP + 2 phosphate(in) + H(+). Its function is as follows. Part of the ABC transporter complex PstSACB involved in phosphate import. Responsible for energy coupling to the transport system. This chain is Phosphate import ATP-binding protein PstB, found in Methanosarcina mazei (strain ATCC BAA-159 / DSM 3647 / Goe1 / Go1 / JCM 11833 / OCM 88) (Methanosarcina frisia).